The following is an 836-amino-acid chain: Neuroligin-2 (836 aa).

Positions 1-14 (MWLLALCLVGLAGA) are cleaved as a signal peptide. Residues 15–678 (QRGGGGPGGG…DSRDYSTELS (664 aa)) lie on the Extracellular side of the membrane. Asparagine 98 and asparagine 136 each carry an N-linked (GlcNAc...) asparagine glycan. Cystine bridges form between cysteine 106-cysteine 141, cysteine 317-cysteine 328, and cysteine 487-cysteine 521. N-linked (GlcNAc...) asparagine glycosylation occurs at asparagine 522. The segment at 623 to 661 (PPYATRWPPRTPGPGTSGTRRPPPPATLPPESDIDLGPR) is disordered. A helical transmembrane segment spans residues 679–699 (VTVAVGASLLFLNILAFAALY). The interval 679 to 699 (VTVAVGASLLFLNILAFAALY) is required for interaction with LHFPL4. The Cytoplasmic portion of the chain corresponds to 700–836 (YKRDRRQELR…LPHPHSTTRV (137 aa)). Disordered regions lie at residues 711–735 (RRLSPPGGSGSGVPGGGPLLPTAGR) and 791–836 (LLPS…TTRV). A phosphoserine mark is found at serine 714 and serine 719. A compositionally biased stretch (gly residues) spans 717–728 (GGSGSGVPGGGP). Residues 796 to 819 (LGPPPPPPPPSLHPFGPFPPPPPT) show a composition bias toward pro residues. A compositionally biased stretch (polar residues) spans 824-836 (NNTLPHPHSTTRV).

Belongs to the type-B carboxylesterase/lipase family. Interacts with neurexins NRXN1, NRXN2 and NRXN3. Interaction with neurexins is mediated by heparan sulfate glycan modification on neurexin. Interacts (via its C-terminus) with DLG4/PSD-95 (via PDZ domain 3). Interacts with PATJ. Interacts with MDGA2. Interacts with GPHN. Interacts with MDGA1. Found in a complex with MAGI2 and IGSF9B, where it interacts with MAGI2 (via WW 1, WW 2 and PDZ 2 domains). Identified in a complex of 720 kDa composed of LHFPL4, NLGN2, GABRA1, GABRB2, GABRG2 and GABRB3. Interacts with LHFPL4; leading to mutual regulation of the protein level and synaptic clustering. Interacts with GABRA1. As to expression, brain and arteries. Detected in the retina outer plexiform layer (at protein level). Widely expressed. Detected in heart, brain, spleen, lung, liver, skeletal muscle, kidney and testis.

The protein resides in the cell membrane. The protein localises to the postsynaptic cell membrane. It is found in the presynaptic cell membrane. In terms of biological role, transmembrane scaffolding protein involved in cell-cell interactions via its interactions with neurexin family members. Mediates cell-cell interactions both in neurons and in other types of cells, such as Langerhans beta cells. Mediates cell-cell interactions between Langerhans beta cells and modulates insulin secretion. Plays a role in synapse function and synaptic signal transmission, especially via gamma-aminobutyric acid receptors (GABA(A) receptors). Functions by recruiting and clustering synaptic proteins. Promotes clustering of postsynaptic GABRG2 and GPHN. Promotes clustering of postsynaptic LHFPL4. Modulates signaling by inhibitory synapses, and thereby plays a role in controlling the ratio of signaling by excitatory and inhibitory synapses and information processing. Required for normal signal amplitude from inhibitory synapses, but is not essential for normal signal frequency. May promote the initial formation of synapses, but is not essential for this. In vitro, triggers the de novo formation of presynaptic structures. This chain is Neuroligin-2 (Nlgn2), found in Mus musculus (Mouse).